Consider the following 74-residue polypeptide: Transcription attenuation protein MtrB (74 aa).

The protein belongs to the MtrB family. Oligomer of 11 identical subunits arranged in doughnut-like structure.

Required for transcription attenuation control in the Trp operon. This trans-acting factor seems to recognize a 10 bases nucleotide sequence in the Trp leader transcript causing transcription termination. Binds the leader RNA only in presence of L-tryptophan. The sequence is that of Transcription attenuation protein MtrB from Geobacillus sp. (strain WCH70).